Here is a 356-residue protein sequence, read N- to C-terminus: Probable protein phosphatase 2C T23F11.1 (356 aa).

A PPM-type phosphatase domain is found at 23-286 (LVGSSCMQGW…DNMTVVLVGL (264 aa)). Mn(2+) contacts are provided by Asp59, Gly60, Asp228, and Asp277. Positions 336–356 (NAANQEEEEDDNEPAPANFQV) are disordered.

This sequence belongs to the PP2C family. Requires Mg(2+) as cofactor. It depends on Mn(2+) as a cofactor.

The enzyme catalyses O-phospho-L-seryl-[protein] + H2O = L-seryl-[protein] + phosphate. It catalyses the reaction O-phospho-L-threonyl-[protein] + H2O = L-threonyl-[protein] + phosphate. This chain is Probable protein phosphatase 2C T23F11.1 (ppm-2), found in Caenorhabditis elegans.